Here is a 257-residue protein sequence, read N- to C-terminus: ECF RNA polymerase sigma factor SigE (257 aa).

The segment at Leu-87 to Arg-153 is sigma-70 factor domain-2. The Polymerase core binding signature appears at Asp-111–Gln-114. A sigma-70 factor domain-4 region spans residues Leu-186–Leu-236. A DNA-binding region (H-T-H motif) is located at residues Tyr-211–His-230.

This sequence belongs to the sigma-70 factor family. ECF subfamily. As to quaternary structure, interacts transiently with the RNA polymerase catalytic core formed by RpoA, RpoB, RpoC and RpoZ (2 alpha, 1 beta, 1 beta' and 1 omega subunit) to form the RNA polymerase holoenzyme that can initiate transcription. Interacts (via sigma-70 factor domain 4) with cognate anti-sigma-E factor RseA under reducing conditions, which stops the sigma factor from functioning.

Sigma factors are initiation factors that promote the attachment of RNA polymerase to specific initiation sites and are then released. Extracytoplasmic function (ECF) sigma factors are held in an inactive form by an anti-sigma factor until released. Responds to surface stress (H(2)O(2)). This chain is ECF RNA polymerase sigma factor SigE (sigE), found in Mycobacterium tuberculosis (strain ATCC 35801 / TMC 107 / Erdman).